Reading from the N-terminus, the 115-residue chain is uncharacterized protein (115 aa).

This is an uncharacterized protein from Treponema pallidum (strain Nichols).